The chain runs to 311 residues: T-cell immunomodulatory protein (311 aa).

3 N-linked (GlcNAc...) asparagine glycosylation sites follow: Asn52, Asn70, and Asn181. The helical transmembrane segment at 266–286 (VLLTAIALIGVCVFILAIIGI) threads the bilayer.

It belongs to the TIP family. As to quaternary structure, interacts with RUVBL1, RUVBL2 and alpha-tubulin.

It is found in the secreted. The protein localises to the cell membrane. Modulator of T-cell function. Has a protective effect in graft versus host disease model. This Macaca fascicularis (Crab-eating macaque) protein is T-cell immunomodulatory protein.